The chain runs to 690 residues: Polyribonucleotide nucleotidyltransferase (690 aa).

Residues Asp-482 and Asp-488 each contribute to the Mg(2+) site. Residues 549-608 (PRIITIQINPDRIRDVIGPGGKVIRALTEETGATIDIQDNGTVTIASVDGEAGAAAKRRI) form the KH domain. The S1 motif domain occupies 618–686 (DTIYDGKVAK…RQGKIKLSMK (69 aa)).

The protein belongs to the polyribonucleotide nucleotidyltransferase family. As to quaternary structure, component of the RNA degradosome, which is a multiprotein complex involved in RNA processing and mRNA degradation. Mg(2+) serves as cofactor.

It is found in the cytoplasm. The enzyme catalyses RNA(n+1) + phosphate = RNA(n) + a ribonucleoside 5'-diphosphate. Involved in mRNA degradation. Catalyzes the phosphorolysis of single-stranded polyribonucleotides processively in the 3'- to 5'-direction. The protein is Polyribonucleotide nucleotidyltransferase of Acidithiobacillus ferrooxidans (strain ATCC 23270 / DSM 14882 / CIP 104768 / NCIMB 8455) (Ferrobacillus ferrooxidans (strain ATCC 23270)).